A 500-amino-acid chain; its full sequence is Probable lipoprotein aminopeptidase LpqL (500 aa).

The signal sequence occupies residues 1-24 (MVNKSRMMPAVLAVAVVVAFLTTG). The N-palmitoyl cysteine moiety is linked to residue cysteine 25. Cysteine 25 carries the S-diacylglycerol cysteine lipid modification. Positions 140-231 (VTGPLVAAPA…VTKSVGFQLR (92 aa)) constitute a PA domain. Histidine 271 and aspartate 283 together coordinate Zn(2+). The active-site Proton acceptor is glutamate 316. Residues glutamate 317, aspartate 345, and histidine 448 each coordinate Zn(2+).

This sequence belongs to the peptidase M28 family. M28A subfamily. Requires Zn(2+) as cofactor. Modified by Lgt on Cys-25 with an S-linked diacylglycerol with a mixture of C16 and C19 fatty acids (palmitic and tuberculostearic acid), signal peptide is removed by LspA, modified by Lnt with an amide-linked mixture of C16 and C19 fatty acids, expressed in M.bovis.

It is found in the cell membrane. It carries out the reaction Release of an N-terminal amino acid, Xaa-|-Yaa-, in which Xaa is preferably Leu, but may be other amino acids including Pro although not Arg or Lys, and Yaa may be Pro. Amino acid amides and methyl esters are also readily hydrolyzed, but rates on arylamides are exceedingly low.. Its function is as follows. An aminopeptidase; acts on free N-terminal amino groups with a very strong preference for Leu in the first position. The sequence is that of Probable lipoprotein aminopeptidase LpqL (lpqL) from Mycobacterium tuberculosis (strain ATCC 25618 / H37Rv).